Here is a 109-residue protein sequence, read N- to C-terminus: Gliadoralin-A (109 aa).

A signal peptide spans 1 to 16 (MLVILLMVVVLALSSA). Q17 is subject to Pyrrolidone carboxylic acid. The segment at 17 to 109 (QDPNRDFVVS…PRYQQPRRAV (93 aa)) is disordered. A compositionally biased stretch (low complexity) spans 35–109 (PSSQQGTVGG…PRYQQPRRAV (75 aa)). Residues 107–109 (RAV) constitute a propeptide that is removed on maturation.

Post-translationally, predominantly proteolytically processed at its C-terminus before secretion to produce the major form gliadoralin A 1-90. Further proteloytically processed after secretion to produce minor forms. Potential substrate of transglutaminase. In terms of tissue distribution, found in saliva (at protein level). Secreted from the submandibular gland.

Its subcellular location is the secreted. In terms of biological role, may play a role in the formation of the protective mucosal protein pellicle involved in the reinforcement and protection of oral mucosal epithelial surface. This chain is Gliadoralin-A, found in Rattus norvegicus (Rat).